A 514-amino-acid chain; its full sequence is Cobyric acid synthase (514 aa).

Positions 263–457 constitute a GATase cobBQ-type domain; it reads ALDVAVIRLP…LHGIFDNDPL (195 aa). Catalysis depends on C344, which acts as the Nucleophile. Residue H449 is part of the active site.

This sequence belongs to the CobB/CobQ family. CobQ subfamily.

Its pathway is cofactor biosynthesis; adenosylcobalamin biosynthesis. In terms of biological role, catalyzes amidations at positions B, D, E, and G on adenosylcobyrinic A,C-diamide. NH(2) groups are provided by glutamine, and one molecule of ATP is hydrogenolyzed for each amidation. In Desulfitobacterium hafniense (strain DSM 10664 / DCB-2), this protein is Cobyric acid synthase.